Consider the following 297-residue polypeptide: Formamidopyrimidine-DNA glycosylase (297 aa).

The active-site Schiff-base intermediate with DNA is the Pro2. Glu3 acts as the Proton donor in catalysis. The Proton donor; for beta-elimination activity role is filled by Lys58. DNA is bound by residues His106, Arg133, and Arg178. Residues 263–297 form an FPG-type zinc finger; sequence FVYDRAGEPCRICGTPIRQILQGQRSTFYCPHCQH. Catalysis depends on Arg287, which acts as the Proton donor; for delta-elimination activity.

It belongs to the FPG family. As to quaternary structure, monomer. It depends on Zn(2+) as a cofactor.

It carries out the reaction Hydrolysis of DNA containing ring-opened 7-methylguanine residues, releasing 2,6-diamino-4-hydroxy-5-(N-methyl)formamidopyrimidine.. The catalysed reaction is 2'-deoxyribonucleotide-(2'-deoxyribose 5'-phosphate)-2'-deoxyribonucleotide-DNA = a 3'-end 2'-deoxyribonucleotide-(2,3-dehydro-2,3-deoxyribose 5'-phosphate)-DNA + a 5'-end 5'-phospho-2'-deoxyribonucleoside-DNA + H(+). Functionally, involved in base excision repair of DNA damaged by oxidation or by mutagenic agents. Acts as a DNA glycosylase that recognizes and removes damaged bases. Has a preference for oxidized purines, such as 7,8-dihydro-8-oxoguanine (8-oxoG). Has AP (apurinic/apyrimidinic) lyase activity and introduces nicks in the DNA strand. Cleaves the DNA backbone by beta-delta elimination to generate a single-strand break at the site of the removed base with both 3'- and 5'-phosphates. The chain is Formamidopyrimidine-DNA glycosylase from Cupriavidus metallidurans (strain ATCC 43123 / DSM 2839 / NBRC 102507 / CH34) (Ralstonia metallidurans).